A 294-amino-acid chain; its full sequence is 33 kDa chaperonin (294 aa).

Disulfide bonds link Cys-238/Cys-240 and Cys-271/Cys-274.

This sequence belongs to the HSP33 family. Under oxidizing conditions two disulfide bonds are formed involving the reactive cysteines. Under reducing conditions zinc is bound to the reactive cysteines and the protein is inactive.

It localises to the cytoplasm. Its function is as follows. Redox regulated molecular chaperone. Protects both thermally unfolding and oxidatively damaged proteins from irreversible aggregation. Plays an important role in the bacterial defense system toward oxidative stress. The polypeptide is 33 kDa chaperonin (Clostridium tetani (strain Massachusetts / E88)).